A 324-amino-acid chain; its full sequence is Cuticle collagen lon-3 (324 aa).

The signal sequence occupies residues Met-1–Ser-30. The tract at residues Val-119 to Tyr-324 is disordered. Triple-helical region stretches follow at residues Gly-129 to Asp-152, Gly-170 to Asp-229, and Gly-235 to Pro-294. Composition is skewed to low complexity over residues Pro-136–Gln-151, Pro-168–Pro-181, Pro-210–Ser-223, Gly-235–Gln-246, and Glu-261–Pro-273. Basic and acidic residues predominate over residues Lys-296–Asn-311. Basic residues predominate over residues Arg-314–Tyr-324.

Belongs to the cuticular collagen family. In terms of assembly, collagen polypeptide chains are complexed within the cuticle by disulfide bonds and other types of covalent cross-links.

Nematode cuticles are composed largely of collagen-like proteins. The cuticle functions both as an exoskeleton and as a barrier to protect the worm from its environment. Dose-dependent regulator of body length and shape. The polypeptide is Cuticle collagen lon-3 (lon-3) (Caenorhabditis elegans).